Reading from the N-terminus, the 309-residue chain is Ribosomal RNA small subunit methyltransferase H (309 aa).

S-adenosyl-L-methionine-binding positions include 30–32, Asp-50, Phe-74, Asp-96, and Gln-103; that span reads GGH.

The protein belongs to the methyltransferase superfamily. RsmH family.

It localises to the cytoplasm. The enzyme catalyses cytidine(1402) in 16S rRNA + S-adenosyl-L-methionine = N(4)-methylcytidine(1402) in 16S rRNA + S-adenosyl-L-homocysteine + H(+). Functionally, specifically methylates the N4 position of cytidine in position 1402 (C1402) of 16S rRNA. This Wigglesworthia glossinidia brevipalpis protein is Ribosomal RNA small subunit methyltransferase H.